We begin with the raw amino-acid sequence, 257 residues long: Snake venom serine protease 2C (257 aa).

The first 18 residues, 1–18 (MVLIRVLANLLILQLSYA), serve as a signal peptide directing secretion. Residues 19–24 (QKSSEL) constitute a propeptide that is removed on maturation. The Peptidase S1 domain maps to 25–248 (VIGGHPCNIN…HLDWIKSIIA (224 aa)). 6 cysteine pairs are disulfide-bonded: Cys-31–Cys-162, Cys-49–Cys-65, Cys-97–Cys-255, Cys-141–Cys-209, Cys-173–Cys-188, and Cys-199–Cys-224. Residues His-64 and Asp-109 each act as charge relay system in the active site. Residues Asn-116, Asn-120, and Asn-121 are each glycosylated (N-linked (GlcNAc...) asparagine). Residue Ser-203 is the Charge relay system of the active site.

This sequence belongs to the peptidase S1 family. Snake venom subfamily. In terms of assembly, monomer. Expressed by the venom gland.

The protein resides in the secreted. In terms of biological role, snake venom serine protease that may act in the hemostasis system of the prey. The polypeptide is Snake venom serine protease 2C (TLG2C) (Craspedocephalus gramineus (Bamboo pit viper)).